The primary structure comprises 275 residues: Lectin DB58 (275 aa).

The N-terminal stretch at 1-22 (MASSTVSVVLSLFLLLLTQAYS) is a signal peptide. N-linked (GlcNAc...) asparagine glycans are attached at residues Asn-34 and Asn-101.

Belongs to the leguminous lectin family. Heterodimer, composed of an alpha and a beta subunit derived from a single precursor. Leu-264 is missing in a major portion of the beta subunit, suggesting an origin by sequential removal of amino acids rather than a processing by endoproteolytic cleavage.

Functionally, metalloglycoprotein, containing Ca, Mg, Mn, and Zn and the carbohydrates galactose, glucosamine, mannose, and fucose. It agglutinates erythrocytes of blood group A1. The protein is Lectin DB58 of Vigna unguiculata subsp. cylindrica (Horse gram).